We begin with the raw amino-acid sequence, 264 residues long: NAD kinase (264 aa).

Catalysis depends on Asp45, which acts as the Proton acceptor. Residues 45–46 (DG), His50, 121–122 (NE), Arg147, Asp149, Ala184, and Gln224 each bind NAD(+).

The protein belongs to the NAD kinase family. It depends on a divalent metal cation as a cofactor.

The protein localises to the cytoplasm. The enzyme catalyses NAD(+) + ATP = ADP + NADP(+) + H(+). Its function is as follows. Involved in the regulation of the intracellular balance of NAD and NADP, and is a key enzyme in the biosynthesis of NADP. Catalyzes specifically the phosphorylation on 2'-hydroxyl of the adenosine moiety of NAD to yield NADP. The sequence is that of NAD kinase from Lysinibacillus sphaericus (strain C3-41).